A 183-amino-acid chain; its full sequence is Photosystem II extrinsic protein V (183 aa).

The first 31 residues, 1–31 (MTFGHCRRASTLRSAFVLGLCGLLLAGCSGA), serve as a signal peptide directing secretion. Heme c contacts are provided by C84, C87, H88, and C138.

It belongs to the cytochrome c family. PsbV subfamily. In terms of assembly, PSII is composed of 1 copy each of membrane proteins PsbA, PsbB, PsbC, PsbD, PsbE, PsbF, PsbH, PsbI, PsbJ, PsbK, PsbL, PsbM, PsbT, PsbX, Psb30/Ycf12, peripheral proteins PsbO, CyanoQ (PsbQ), PsbU, PsbV and a large number of cofactors. It forms dimeric complexes. It depends on heme c as a cofactor.

Its subcellular location is the cell inner membrane. Functionally, probably one of the extrinsic, lumenal subunits of photosystem II (PSII). PSII is a light-driven water plastoquinone oxidoreductase, using light energy to abstract electrons from H(2)O, generating a proton gradient subsequently used for ATP formation. The extrinsic proteins stabilize the structure of photosystem II oxygen-evolving complex (OEC), the ion environment of oxygen evolution and protect the OEC against heat-induced inactivation. Low-potential cytochrome c that plays a role in the OEC of PSII. This Gloeobacter violaceus (strain ATCC 29082 / PCC 7421) protein is Photosystem II extrinsic protein V (psbV1).